A 462-amino-acid chain; its full sequence is Cell wall mannoprotein 1 (462 aa).

The first 18 residues, 1–18 (MKFLSSLVVLGLSAQALA), serve as a signal peptide directing secretion. Ser313 contacts hexadecanoate. Positions 346 to 429 (FAGTGPAPTT…SVPAAPTGGN (84 aa)) are disordered. The span at 347-366 (AGTGPAPTTSSTPEASTAPA) shows a compositional bias: low complexity. Polar residues predominate over residues 399–420 (VWPTSTTASPDVQPTITSSGTS).

The protein belongs to the cell wall mannoprotein 1 family. Monomer. In terms of processing, mannoprotein, glycosylated.

Its subcellular location is the secreted. It is found in the cell wall. Functionally, constitutive protein of the cell wall. Binds fatty acids and may thus serve as a fatty acid transporter between P.marneffei and host cells during infection. Abundant antigen target of host humoral immune response. The protein is Cell wall mannoprotein 1 of Talaromyces marneffei (Penicillium marneffei).